The sequence spans 351 residues: Probable E3 ubiquitin-protein ligase sinah (351 aa).

Residues 1 to 38 (MSVRNSRPQLSWPERVSPQRTIDTPTASGEMLTRRQSA) are disordered. The segment covering 18 to 27 (PQRTIDTPTA) has biased composition (polar residues). The RING-type zinc-finger motif lies at 106–141 (CPVCFGYIMPPIMQCPRGHLICSTCRSKLTICPVCR). The interval 155-346 (VASKLIFPCK…LALNVVIRKV (192 aa)) is SBD. Residues 158 to 218 (KLIFPCKHSH…VYQHLMSSHE (61 aa)) form an SIAH-type zinc finger. Zn(2+) is bound by residues Cys-163, Cys-170, His-182, Cys-186, Cys-193, Cys-200, His-212, and His-217.

It belongs to the SINA (Seven in absentia) family. As to quaternary structure, interacts with ebi and phyl.

The catalysed reaction is S-ubiquitinyl-[E2 ubiquitin-conjugating enzyme]-L-cysteine + [acceptor protein]-L-lysine = [E2 ubiquitin-conjugating enzyme]-L-cysteine + N(6)-ubiquitinyl-[acceptor protein]-L-lysine.. It participates in protein modification; protein ubiquitination. In terms of biological role, E3 ubiquitin-protein ligase that mediates ubiquitination and subsequent proteasomal degradation of target proteins. The adapter phyl is required to direct the degradation of the two isoforms of the transcriptional repressor Tramtrack (Ttk). E3 ubiquitin ligases accept ubiquitin from an E2 ubiquitin-conjugating enzyme in the form of a thioester and then directly transfers the ubiquitin to targeted substrates. It probably triggers the ubiquitin-mediated degradation of different substrates. A phyl-independent mechanism of degradation exists for isoform beta of ttk that involves motifs in the C-terminus of ttk. The polypeptide is Probable E3 ubiquitin-protein ligase sinah (sinah) (Drosophila melanogaster (Fruit fly)).